The chain runs to 467 residues: 3-isopropylmalate dehydratase large subunit (467 aa).

Residues C349, C409, and C412 each coordinate [4Fe-4S] cluster.

The protein belongs to the aconitase/IPM isomerase family. LeuC type 1 subfamily. In terms of assembly, heterodimer of LeuC and LeuD. [4Fe-4S] cluster serves as cofactor.

The enzyme catalyses (2R,3S)-3-isopropylmalate = (2S)-2-isopropylmalate. The protein operates within amino-acid biosynthesis; L-leucine biosynthesis; L-leucine from 3-methyl-2-oxobutanoate: step 2/4. Catalyzes the isomerization between 2-isopropylmalate and 3-isopropylmalate, via the formation of 2-isopropylmaleate. This chain is 3-isopropylmalate dehydratase large subunit, found in Vibrio cholerae serotype O1 (strain ATCC 39541 / Classical Ogawa 395 / O395).